The chain runs to 518 residues: FAD-dependent monooxygenase tpcD (518 aa).

A signal peptide spans 1-22 (MQLLGTLSWLYAIQASIGSSKA). An N-linked (GlcNAc...) asparagine glycan is attached at Asn61. The 172-residue stretch at 75–246 (QSAQPACLVH…TRFDLDVFQQ (172 aa)) folds into the FAD-binding PCMH-type domain. The residue at position 112 (His112) is a Pros-8alpha-FAD histidine. Residues Asn163, Asn208, Asn216, and Asn346 are each glycosylated (N-linked (GlcNAc...) asparagine).

This sequence belongs to the oxygen-dependent FAD-linked oxidoreductase family. The cofactor is FAD.

Its pathway is secondary metabolite biosynthesis; terpenoid biosynthesis. FAD-dependent monooxygenase; part of the gene cluster that mediates the biosynthesis of terpestacin. The bifunctional terpene synthase tpcA converts isopentenyl diphosphate (IPP) and dimethylallyl diphosphate (DMAPP) into the sesterterpene preterpestacin I. The C-terminal prenyltransferase (PT) domain of tpcA catalyzes formation of GFPP, whereas the N-terminal terpene cyclase (TC) domain catalyzes the cyclization of GFPP into preterpestacin I. The cytochrome P450 monooxygenase tpcB then hydroxylates preterpestacin I to yield 24-hydroxypreterpstacin I (renamed as preterpestacin II) whereas the cytochrome P450 monooxygenase tpcC further hydroxylates preterpestacin II to yield 16,17-dihydroxypreterpestacin II (renamed as preterpestacin III). Finally, the FAD-dependent monooxygenase tpcD converts preterpestacin III into terpestacin. The sequence is that of FAD-dependent monooxygenase tpcD from Cochliobolus heterostrophus (strain C5 / ATCC 48332 / race O) (Southern corn leaf blight fungus).